A 361-amino-acid chain; its full sequence is Trans-2,3-enoyl-CoA reductase-like (361 aa).

A phosphoserine mark is found at Ser33 and Ser35. 4 consecutive transmembrane segments (helical) span residues 139–159 (VGWTTVFLAEYSGPLLIYLLF), 181–201 (VHLAFFCHCIHYIRLLLETLF), 215–235 (LIKGCAFYWGFTSWMAYYINH), and 309–329 (ISFTVMTQTLPVGIFTILMTI).

It belongs to the steroid 5-alpha reductase family. As to expression, expression is highest in the heart with very low to almost undetectable levels in brain, skeletal muscle, stomach, pancreas, liver, kidney, small intestine, and uterus.

It is found in the membrane. Its subcellular location is the endoplasmic reticulum. The chain is Trans-2,3-enoyl-CoA reductase-like (Tecrl) from Mus musculus (Mouse).